We begin with the raw amino-acid sequence, 904 residues long: Translation initiation factor IF-2 (904 aa).

The disordered stretch occupies residues 239–316; the sequence is QAATQAKTSE…DDGQGSFQAP (78 aa). Over residues 248–278 the composition is skewed to basic and acidic residues; sequence EGAEKGTLHKKPETPGKKGDKGGRAADDGKK. In terms of domain architecture, tr-type G spans 404–571; it reads HRAPVVTVMG…QVLLQAEILE (168 aa). Residues 413 to 420 are G1; sequence GHVDHGKT. 413 to 420 lines the GTP pocket; sequence GHVDHGKT. A G2 region spans residues 438 to 442; that stretch reads GITQH. The segment at 459–462 is G3; it reads DTPG. GTP contacts are provided by residues 459–463 and 513–516; these read DTPGH and NKID. Positions 513–516 are G4; the sequence is NKID. Residues 549–551 form a G5 region; the sequence is SAK.

Belongs to the TRAFAC class translation factor GTPase superfamily. Classic translation factor GTPase family. IF-2 subfamily.

It localises to the cytoplasm. Its function is as follows. One of the essential components for the initiation of protein synthesis. Protects formylmethionyl-tRNA from spontaneous hydrolysis and promotes its binding to the 30S ribosomal subunits. Also involved in the hydrolysis of GTP during the formation of the 70S ribosomal complex. The protein is Translation initiation factor IF-2 of Dechloromonas aromatica (strain RCB).